The sequence spans 298 residues: MFKSGFVAILGRPNVGKSTFLNHVMGQKIAVMSDKAQTTRNKIMGIYTTETEQIVFIDTPGIHKPKTALGDFMVESAYSTLREVETVLFMVPADEKRGKGDDMIIERLKAARIPVILVINKIDKVHPDQLLEQIDDFRSQMDFKEIVPISALQGNNVETLVQLLKDNLEEGFQYFPEDQITDHPERFLVSEMVREKVLHLTQQEVPHSVAVVVDSMKRDEVTDKVHIRVTIMVERDSQKGIIIGKQGAMLKKIGKLARRDIELMLGDKVYLETWVKVKKNWRDKKLDLADFGYNQKEY.

In terms of domain architecture, Era-type G spans 3–170; that stretch reads KSGFVAILGR…VQLLKDNLEE (168 aa). The interval 11–18 is G1; sequence GRPNVGKS. A GTP-binding site is contributed by 11-18; the sequence is GRPNVGKS. The G2 stretch occupies residues 37–41; it reads QTTRN. Positions 58–61 are G3; the sequence is DTPG. GTP-binding positions include 58 to 62 and 120 to 123; these read DTPGI and NKID. The G4 stretch occupies residues 120-123; that stretch reads NKID. The interval 149 to 151 is G5; it reads ISA. A KH type-2 domain is found at 201–279; it reads TQQEVPHSVA…YLETWVKVKK (79 aa).

This sequence belongs to the TRAFAC class TrmE-Era-EngA-EngB-Septin-like GTPase superfamily. Era GTPase family. As to quaternary structure, monomer.

It localises to the cytoplasm. The protein localises to the cell membrane. An essential GTPase that binds both GDP and GTP, with rapid nucleotide exchange. Plays a role in 16S rRNA processing and 30S ribosomal subunit biogenesis and possibly also in cell cycle regulation and energy metabolism. The protein is GTPase Era of Streptococcus equi subsp. equi (strain 4047).